Consider the following 433-residue polypeptide: Schlafen-like protein 2 (433 aa).

A B30.2/SPRY domain is found at 1–168 (MADTSPRESK…LSVNFGSQPF (168 aa)). The tract at residues 199–400 (EHVVVKLPFA…RRMASNKCVY (202 aa)) is SLFN-like fold. Active-site residues include E211 and E216.

This sequence belongs to the Schlafen family. As to quaternary structure, component of the trimeric PUCH (precursor of 21U RNA 5'-end cleavage holoenzyme) complex; consisting of tofu-1, tofu-2 and either slfl-3 or slfl-4. Within the complex, interacts (via N-terminus) with tofu-1 (via N-terminus); the interaction stabilizes tofu-2 and may form a functional nuclease. Within the complex, interacts (via N-terminus) with slfl-3 (via N-terminus); the presence of tofu-1 is required for this interaction. Mg(2+) serves as cofactor. As to expression, expressed in the germline.

The protein localises to the cytoplasm. The protein resides in the mitochondrion. Inhibited by ethylenediaminetetraacetic acid (EDTA). Its function is as follows. Component of the trimeric PUCH (precursor of 21U RNA 5'-end cleavage holoenzyme) complex, that acts as an endoribonuclease processing the 5'-end of precursor Piwi-interacting RNAs (piRNAs). The PUCH complex consists of tofu-1, tofu-2 and either slfl-3 or slfl-4, with tofu-2 exhibiting endoribonuclease activity. PUCH-mediated processing strictly requires a 7-methyl-G cap (m7 G-cap) and an uracil at position three (U3). PUCH also exhibits a strict bias for piRNA precursors with an A or G at position 1. Mature piRNA production is enhanced by the interaction of PUCH with the PETISCO complex, which is stabilizing piRNA precursors and allows their processing by PUCH. This chain is Schlafen-like protein 2, found in Caenorhabditis elegans.